The primary structure comprises 393 residues: Acetyl-CoA acetyltransferase (393 aa).

The Acyl-thioester intermediate role is filled by cysteine 90. Residues histidine 349 and cysteine 379 each act as proton acceptor in the active site.

Belongs to the thiolase-like superfamily. Thiolase family. As to quaternary structure, homotetramer.

It localises to the cytoplasm. The catalysed reaction is 2 acetyl-CoA = acetoacetyl-CoA + CoA. It participates in biopolymer metabolism; poly-(R)-3-hydroxybutanoate biosynthesis. It functions in the pathway metabolic intermediate biosynthesis; (R)-mevalonate biosynthesis; (R)-mevalonate from acetyl-CoA: step 1/3. This is Acetyl-CoA acetyltransferase from Rhizobium meliloti (strain 1021) (Ensifer meliloti).